A 266-amino-acid polypeptide reads, in one-letter code: Tryptophan synthase alpha chain (266 aa).

Active-site proton acceptor residues include E46 and D57.

Belongs to the TrpA family. Tetramer of two alpha and two beta chains.

It catalyses the reaction (1S,2R)-1-C-(indol-3-yl)glycerol 3-phosphate + L-serine = D-glyceraldehyde 3-phosphate + L-tryptophan + H2O. The protein operates within amino-acid biosynthesis; L-tryptophan biosynthesis; L-tryptophan from chorismate: step 5/5. Functionally, the alpha subunit is responsible for the aldol cleavage of indoleglycerol phosphate to indole and glyceraldehyde 3-phosphate. The chain is Tryptophan synthase alpha chain from Lacticaseibacillus casei (Lactobacillus casei).